A 726-amino-acid polypeptide reads, in one-letter code: F-box protein COS111 (726 aa).

The region spanning 143–194 is the F-box domain; the sequence is FADINCLPEEIICRIIANLNDADSQRNCLLVSQEWSECAKRIIYKDVKFTST. The interval 276-295 is disordered; sequence RSRTRRSSDASSMNSSVFSH. Positions 284–295 are enriched in low complexity; the sequence is DASSMNSSVFSH.

Functionally, F-box protein probably involved in ubiquitin conjugation pathway. In Kluyveromyces lactis (strain ATCC 8585 / CBS 2359 / DSM 70799 / NBRC 1267 / NRRL Y-1140 / WM37) (Yeast), this protein is F-box protein COS111 (COS111).